The following is a 591-amino-acid chain: Mono(ADP-ribosyl)transferase SpvB (591 aa).

The 204-residue stretch at 373-576 (PMMGGNSSRP…LRLSDDATAD (204 aa)) folds into the TR mART core domain. NAD(+) is bound by residues arginine 414 and 471–477 (RGLKLDK). Catalysis depends on residues arginine 471, serine 501, and glutamate 538. Glutamate 538 contacts NAD(+).

Belongs to the SpvB family.

The protein localises to the secreted. It carries out the reaction L-arginyl-[protein] + NAD(+) = N(omega)-(ADP-D-ribosyl)-L-arginyl-[protein] + nicotinamide + H(+). Inhibited by novobiocin. Mono-ADP-ribosylates eukaryotic muscle and non-muscle actin on 'Arg-177'. ADP-ribosylates all actins tested, has more activity on nonmuscle beta/gamma-actin than on muscle alpha-actin. Prefers monomeric G-actin but can weakly ADP-ribosylate F-actin. ADP-ribosylation prevents the polymerization of G-actin to F-actin, causing actin filament depolymerization, destruction of the cytoskeleton and cytotoxicity. Does not possess NAD(+)-glycohydrolase activity, unlike most mART enzymes. This chain is Mono(ADP-ribosyl)transferase SpvB (spvB), found in Salmonella typhimurium.